The chain runs to 127 residues: Large ribosomal subunit protein bL21 (127 aa).

Positions 102-127 (TDNAKPTKGPRPKKAKAEAPAADAAE) are disordered.

Belongs to the bacterial ribosomal protein bL21 family. In terms of assembly, part of the 50S ribosomal subunit. Contacts protein L20.

Its function is as follows. This protein binds to 23S rRNA in the presence of protein L20. The chain is Large ribosomal subunit protein bL21 from Bradyrhizobium sp. (strain BTAi1 / ATCC BAA-1182).